A 293-amino-acid polypeptide reads, in one-letter code: ATP synthase gamma chain (293 aa).

The protein belongs to the ATPase gamma chain family. In terms of assembly, F-type ATPases have 2 components, CF(1) - the catalytic core - and CF(0) - the membrane proton channel. CF(1) has five subunits: alpha(3), beta(3), gamma(1), delta(1), epsilon(1). CF(0) has three main subunits: a, b and c.

Its subcellular location is the cell membrane. Produces ATP from ADP in the presence of a proton gradient across the membrane. The gamma chain is believed to be important in regulating ATPase activity and the flow of protons through the CF(0) complex. This chain is ATP synthase gamma chain, found in Streptococcus agalactiae serotype III (strain NEM316).